A 602-amino-acid polypeptide reads, in one-letter code: MFRQFRSEVADALGDALASLDLPTDDLGIERPPDDMDATLASSVAFRLAGEVGDAPPNVAATVADAVDVDGYDYLAAVDTAGPYVNFHPGERYFVDTLDASAVDSGYGALPDRDTSVVVEHTSANPTGPVHVGRARNPIVGDAVANLLEYAGYDVDRHYYVNDAGRQMAVFTWAYERFDESDLAGEPARARAEYDLVRYYRKGNAYLEEADPEAVEAAEEEIAAILQGLEAGDEETYERVGEVVDTVLGGMKECLARLPAEFDEFVKETRFMRDGSTDDIAARLKETDHAVYEEDAWQLELDDWGIDKNLVFLRSDDTSLYTTRDLAHHEWKFDNYDRAVTVLGEDHKLQADQLDATLELLGNDIDRLGHVIYSYVNLPDGKMSTRRGTGVMLDDLLDEAIDRAREAVETRMDDRIRDDDLTEEDVERIAHEVGIGAVRYDIVSKQPAKAITFEWEDALDFEGQSAPFVQYVHARCCGILDEAADAGIEVPGVTADSEGVVDVGALDVDATVFETDAARDLLREVARFPAAIESAADDLEPHTIATFTREFADAYNAFYRECPVVTSDDEELRAARVALVAAAKHTMANALDVLGVEAPESM.

The 'HIGH' region motif lies at 124–134 (ANPTGPVHVGR).

It belongs to the class-I aminoacyl-tRNA synthetase family.

It localises to the cytoplasm. It carries out the reaction tRNA(Arg) + L-arginine + ATP = L-arginyl-tRNA(Arg) + AMP + diphosphate. The protein is Arginine--tRNA ligase of Halorubrum lacusprofundi (strain ATCC 49239 / DSM 5036 / JCM 8891 / ACAM 34).